Consider the following 68-residue polypeptide: Defensin gallicin (68 aa).

Positions 1–16 are cleaved as a signal peptide; that stretch reads MWIESDAGVAIDRHAR.

Contains 5 disulfide bonds. As to expression, expressed in hemolymph, gills, digestive gland, foot, adductor muscles and mantle.

It localises to the secreted. The protein resides in the target cell membrane. Its function is as follows. Shows antibacterial activity against numerous Gram-positive bacteria. It selectively inhibits peptidoglycan biosynthesis through complex formation with the cell wall precursor lipid II (1:1 molar ratio) thus inhibiting cell wall synthesis. This chain is Defensin gallicin, found in Mytilus galloprovincialis (Mediterranean mussel).